A 145-amino-acid polypeptide reads, in one-letter code: D-aminoacyl-tRNA deacylase (145 aa).

A Gly-cisPro motif, important for rejection of L-amino acids motif is present at residues 137 to 138 (GP).

The protein belongs to the DTD family. As to quaternary structure, homodimer.

The protein localises to the cytoplasm. The enzyme catalyses glycyl-tRNA(Ala) + H2O = tRNA(Ala) + glycine + H(+). It catalyses the reaction a D-aminoacyl-tRNA + H2O = a tRNA + a D-alpha-amino acid + H(+). Functionally, an aminoacyl-tRNA editing enzyme that deacylates mischarged D-aminoacyl-tRNAs. Also deacylates mischarged glycyl-tRNA(Ala), protecting cells against glycine mischarging by AlaRS. Acts via tRNA-based rather than protein-based catalysis; rejects L-amino acids rather than detecting D-amino acids in the active site. By recycling D-aminoacyl-tRNA to D-amino acids and free tRNA molecules, this enzyme counteracts the toxicity associated with the formation of D-aminoacyl-tRNA entities in vivo and helps enforce protein L-homochirality. This is D-aminoacyl-tRNA deacylase from Klebsiella pneumoniae (strain 342).